A 469-amino-acid chain; its full sequence is MSPFLTEDFLLDTEFARRLYHDYAEEQPIFDYHCHLPPEQIAENYRFKNLYDIWLKGDHYKWRAMRTNGVAECFCTGEASDREKFQAWAETVPHTIGNPLYHWTHLELRRPFGITDTLLSATTAEDIWTRCNRMLAEDSFTARGIMGQMNVKMVGTTDDPIDDLRHHRTIAADSSFTTKVLPSWRPDKAFNIEAALFSDYIVKLGAVADVDITRFADLCQALKVRMDHFAAHGCKVSDHALDVVVYGEADDATLDGILARRLSGGTPGEIEVAQFKTAVLLFLGCEYRRRGWVQQYHIGALRNNNTPMFERLGPDIGFDSINDAPVAQPLSRLLDAQSRNGGLTKTILYCLNPRDNEVLGTMIGNFQGEGMPGKMQFGSGWWFNDQKDGMQRQMTQLAQLGLLSRFVGMLTDSRSFLSYTRHEYFRRILCQMIGRWVAQGEAPADIALLGSMVKNICFDNAKSYFAIEL.

Belongs to the metallo-dependent hydrolases superfamily. Uronate isomerase family.

It carries out the reaction D-glucuronate = D-fructuronate. It catalyses the reaction aldehydo-D-galacturonate = keto-D-tagaturonate. It functions in the pathway carbohydrate metabolism; pentose and glucuronate interconversion. The polypeptide is Uronate isomerase (Edwardsiella ictaluri (strain 93-146)).